A 114-amino-acid chain; its full sequence is Ribosome-binding factor A (114 aa).

This sequence belongs to the RbfA family. As to quaternary structure, monomer. Binds 30S ribosomal subunits, but not 50S ribosomal subunits or 70S ribosomes.

It is found in the cytoplasm. Its function is as follows. One of several proteins that assist in the late maturation steps of the functional core of the 30S ribosomal subunit. Associates with free 30S ribosomal subunits (but not with 30S subunits that are part of 70S ribosomes or polysomes). Required for efficient processing of 16S rRNA. May interact with the 5'-terminal helix region of 16S rRNA. The chain is Ribosome-binding factor A from Phytoplasma mali (strain AT).